Consider the following 211-residue polypeptide: Cytochrome c biogenesis ATP-binding export protein CcmA (211 aa).

The 193-residue stretch at 17–209 (LDVEDVTVFR…PSLAHVESFW (193 aa)) folds into the ABC transporter domain. 49-56 (GPNGAGKS) is an ATP binding site.

It belongs to the ABC transporter superfamily. CcmA exporter (TC 3.A.1.107) family. The complex is composed of two ATP-binding proteins (CcmA) and two transmembrane proteins (CcmB).

The protein resides in the cell inner membrane. The catalysed reaction is heme b(in) + ATP + H2O = heme b(out) + ADP + phosphate + H(+). In terms of biological role, part of the ABC transporter complex CcmAB involved in the biogenesis of c-type cytochromes; once thought to export heme, this seems not to be the case, but its exact role is uncertain. Responsible for energy coupling to the transport system. This Gluconobacter oxydans (strain 621H) (Gluconobacter suboxydans) protein is Cytochrome c biogenesis ATP-binding export protein CcmA.